A 118-amino-acid chain; its full sequence is Thioredoxin-like protein CXXS1 (118 aa).

The 109-residue stretch at 2-110 folds into the Thioredoxin domain; the sequence is ARVVKIDSAE…IKKRVDGFVQ (109 aa).

It belongs to the thioredoxin family. Ubiquitous.

The protein resides in the cytoplasm. Possesses low disulfide reductase activity, but efficient protein disulfide isomerase activity. Does not possess deglutathionylation activity. The protein is Thioredoxin-like protein CXXS1 (CXXS1) of Arabidopsis thaliana (Mouse-ear cress).